Consider the following 381-residue polypeptide: Dual-specificity RNA methyltransferase RlmN (381 aa).

E96 functions as the Proton acceptor in the catalytic mechanism. Residues 102-342 (TDDRGTLCVS…TRTTRGDDID (241 aa)) form the Radical SAM core domain. C109 and C345 are joined by a disulfide. [4Fe-4S] cluster contacts are provided by C116, C120, and C123. S-adenosyl-L-methionine-binding positions include 170–171 (GE), S202, 224–226 (SLH), and N302. C345 functions as the S-methylcysteine intermediate in the catalytic mechanism.

It belongs to the radical SAM superfamily. RlmN family. The cofactor is [4Fe-4S] cluster.

It is found in the cytoplasm. It carries out the reaction adenosine(2503) in 23S rRNA + 2 reduced [2Fe-2S]-[ferredoxin] + 2 S-adenosyl-L-methionine = 2-methyladenosine(2503) in 23S rRNA + 5'-deoxyadenosine + L-methionine + 2 oxidized [2Fe-2S]-[ferredoxin] + S-adenosyl-L-homocysteine. The catalysed reaction is adenosine(37) in tRNA + 2 reduced [2Fe-2S]-[ferredoxin] + 2 S-adenosyl-L-methionine = 2-methyladenosine(37) in tRNA + 5'-deoxyadenosine + L-methionine + 2 oxidized [2Fe-2S]-[ferredoxin] + S-adenosyl-L-homocysteine. Specifically methylates position 2 of adenine 2503 in 23S rRNA and position 2 of adenine 37 in tRNAs. m2A2503 modification seems to play a crucial role in the proofreading step occurring at the peptidyl transferase center and thus would serve to optimize ribosomal fidelity. The chain is Dual-specificity RNA methyltransferase RlmN from Pseudomonas putida (strain GB-1).